Consider the following 488-residue polypeptide: Inosine-5'-monophosphate dehydrogenase (488 aa).

2 consecutive CBS domains span residues 95-153 and 157-216; these read VISN…SIKI and MTQE…AKDE. Residues aspartate 250 and 300-302 each bind NAD(+); that span reads GIG. Residues glycine 302 and glycine 304 each coordinate K(+). Residue serine 305 coordinates IMP. Cysteine 307 is a K(+) binding site. Cysteine 307 acts as the Thioimidate intermediate in catalysis. IMP contacts are provided by residues 340–342, 363–364, and 387–391; these read DGG, GS, and YRGMG. Catalysis depends on arginine 403, which acts as the Proton acceptor. Glutamate 417 provides a ligand contact to IMP. Positions 468 to 488 are disordered; the sequence is GLAESHPHNIQITKESPNYSF. Positions 471, 472, and 473 each coordinate K(+). Over residues 475–488 the composition is skewed to polar residues; it reads HNIQITKESPNYSF.

It belongs to the IMPDH/GMPR family. In terms of assembly, homotetramer. The cofactor is K(+).

It catalyses the reaction IMP + NAD(+) + H2O = XMP + NADH + H(+). Its pathway is purine metabolism; XMP biosynthesis via de novo pathway; XMP from IMP: step 1/1. Mycophenolic acid (MPA) is a non-competitive inhibitor that prevents formation of the closed enzyme conformation by binding to the same site as the amobile flap. In contrast, mizoribine monophosphate (MZP) is a competitive inhibitor that induces the closed conformation. MPA is a potent inhibitor of mammalian IMPDHs but a poor inhibitor of the bacterial enzymes. MZP is a more potent inhibitor of bacterial IMPDH. Catalyzes the conversion of inosine 5'-phosphate (IMP) to xanthosine 5'-phosphate (XMP), the first committed and rate-limiting step in the de novo synthesis of guanine nucleotides, and therefore plays an important role in the regulation of cell growth. This is Inosine-5'-monophosphate dehydrogenase from Staphylococcus aureus (strain Mu50 / ATCC 700699).